We begin with the raw amino-acid sequence, 67 residues long: Moricin (67 aa).

The N-terminal stretch at 1–23 is a signal peptide; the sequence is MKLTSLFIFVIVALSLLFSSTDA.

It belongs to the moricin family. In terms of assembly, monomer.

The protein localises to the secreted. Antimicrobial peptide. Active against a broad spectrum of Gram-positive and Gram-negative bacteria including methicillin-resistant S.aureus ATCC 43 300, S.aureus BAA-39, pathogenic strains of L.monocytogenes, K.pneumoniae, E.coli O157:H7, S.typhimurium and multidrug-resistant S.typhimurium DT104 with minimum inhibitory concentration (MIC) of 1.4 uM for all except for S.aureus BAA-39. Also active against Serratia marcescens. Probably acts by disturbing membrane functions with its amphipathic alpha-helical structure. May protect a developing embryo from bacterial infection. The protein is Moricin of Manduca sexta (Tobacco hawkmoth).